A 430-amino-acid chain; its full sequence is Adenylosuccinate synthetase (430 aa).

GTP-binding positions include 11–17 and 39–41; these read GDEGKGK and GHS. Residue Asp12 is the Proton acceptor of the active site. The Mg(2+) site is built by Asp12 and Gly39. IMP is bound by residues 12 to 15, 37 to 40, Thr129, Arg143, Asn221, Thr236, and Arg300; these read DEGK and NAGH. The active-site Proton donor is the His40. 296–302 lines the substrate pocket; sequence VSTGRKR. Residues Arg302, 328–330, and 412–414 contribute to the GTP site; these read KLD and GTG.

The protein belongs to the adenylosuccinate synthetase family. As to quaternary structure, homodimer. Requires Mg(2+) as cofactor.

Its subcellular location is the cytoplasm. It catalyses the reaction IMP + L-aspartate + GTP = N(6)-(1,2-dicarboxyethyl)-AMP + GDP + phosphate + 2 H(+). It functions in the pathway purine metabolism; AMP biosynthesis via de novo pathway; AMP from IMP: step 1/2. Its function is as follows. Plays an important role in the de novo pathway and in the salvage pathway of purine nucleotide biosynthesis. Catalyzes the first committed step in the biosynthesis of AMP from IMP. The sequence is that of Adenylosuccinate synthetase from Neurospora crassa (strain ATCC 24698 / 74-OR23-1A / CBS 708.71 / DSM 1257 / FGSC 987).